Consider the following 118-residue polypeptide: Cell division protein SepF (118 aa).

The interval 1 to 12 (MGIMSKILGGGG) is important for localization in a ring-like structure at midcell.

As to quaternary structure, homodimer. Does not oligomerize. Interacts with FtsZ2.

The protein localises to the cytoplasm. Functionally, involved in cell division. Probably acts as a membrane anchor for FstZ2, tethering its filaments to the division site. May be involved in septum closure. The protein is Cell division protein SepF of Haloferax volcanii (strain ATCC 29605 / DSM 3757 / JCM 8879 / NBRC 14742 / NCIMB 2012 / VKM B-1768 / DS2) (Halobacterium volcanii).